A 909-amino-acid chain; its full sequence is E3 ubiquitin-protein ligase HACE1 (909 aa).

Residues 1-21 are N-terminal helix important for homodimerization; sequence MERAMEQLNRLTRSLRRARTV. ANK repeat units follow at residues 23–55, 64–93, 97–126, 130–159, 163–192, 196–226, and 228–253; these read LPDD…NSKF, VKRS…NPNY, SGCT…DVNI, EGLT…DVDV, MGQT…DINR, SGAT…YLSD, and NGVT…QYHP. The segment at 396–433 is disordered; that stretch reads KGQDQDGTSIPPFEPPGPGSYENLSTGTGESKPDVLGG. Residues 574-909 form the HECT domain; that stretch reads NCAKLKQGIA…HCGSYGYTMA (336 aa). Residue cysteine 876 is the Glycyl thioester intermediate of the active site.

As to quaternary structure, homodimer. The homodimer is autoinhibited and stabilized by its N-terminal helix. Interacts with RAB1 (RAB1A, RAB1B or RAB1C), RAB4 (RAB4A or RAB4B) and RAB11 (RAB11A or RAB11B); in a GTP-dependent manner. Interacts with the 26S proteasomal complex through the 20S core proteasomal subunit. Interacts with RARB. Autoubiquitinated.

Its subcellular location is the golgi apparatus. The protein resides in the golgi stack membrane. It is found in the cytoplasm. The protein localises to the endoplasmic reticulum. The enzyme catalyses S-ubiquitinyl-[E2 ubiquitin-conjugating enzyme]-L-cysteine + [acceptor protein]-L-lysine = [E2 ubiquitin-conjugating enzyme]-L-cysteine + N(6)-ubiquitinyl-[acceptor protein]-L-lysine.. It participates in protein modification; protein ubiquitination. In terms of biological role, E3 ubiquitin-protein ligase involved in Golgi membrane fusion and regulation of small GTPases. Acts as a regulator of Golgi membrane dynamics during the cell cycle: recruited to Golgi membrane by Rab proteins and regulates postmitotic Golgi membrane fusion. Acts by mediating ubiquitination during mitotic Golgi disassembly, ubiquitination serving as a signal for Golgi reassembly later, after cell division. Specifically binds GTP-bound RAC1, mediating ubiquitination and subsequent degradation of active RAC1, thereby playing a role in host defense against pathogens. May also act as a transcription regulator via its interaction with RARB. This chain is E3 ubiquitin-protein ligase HACE1 (HACE1), found in Bos taurus (Bovine).